The sequence spans 721 residues: MTSKEKIPTFNTEEDVESYISFNAQAKIYDDFAIDLQAVESYIQEHVKPKTKVFHSTKERLDFLIKNDYYDEKIINMYSFEQFEEITHKAYSYRFRYANFMGAFKFYNAYALKTFDGKYYLENYEDRVVMNVLMLANGNFNKALKLLKQIILNRFQPATPTFLNAGRKKRGEFVSCYLLRIEDNMESIGRAITTTLQLSKRDGGVALLLSNLREAGAPIKKIENQSSGIIPIMKLLEDSFSYSNQLGQRQGAGAVYLHCHHPDVMQFLDTKRENADEKIRIKSLSLGLVIPDITFQLAKNNEMMALFSPYDIYQEYGKALSDISVTEMYYELLENQRIKKTFISARKFFQTIAELHFESGYPYILFDDTVNRRNAHKNRIVMSNLCSEIVQPSLPSEFYSDLTFKKVGSDISCNLGSLNIARAMESGSELAELIQLAIESLDLVSRISSLETAPSIKKGNSENHALGLGAMNLHGFLATNAIYYDSKEAVDFTNIFFYTVAYHAFSASNKLALELGKFKDFENTKFADGSYFDKYTKVASDFWTCKTEKVQALFDKYQVKIPTQENWKQLVASIQKDGLANSHLMAIAPTGSISYLSSCTPSLQPVVSPVEVRKEGKLGRIYVPAYKLDNDNYQYFKDGAYELGFEPIINIVAAAQQHVDQAISLTLFMTDKATTRDLNKAYIYAFKKGCSSIYYVRVRQDVLKDSEDHTIKIKDCEVCSI.

Substrate is bound by residues Thr159, 175-176, Gly204, 384-388, and 589-593; these read SC, NLCSE, and PTGSI. An intrachain disulfide couples Cys176 to Cys413. The active-site Proton acceptor is Asn384. Cys386 functions as the Cysteine radical intermediate in the catalytic mechanism. The active-site Proton acceptor is the Glu388.

This sequence belongs to the ribonucleoside diphosphate reductase large chain family. As to quaternary structure, tetramer of two alpha and two beta subunits.

The catalysed reaction is a 2'-deoxyribonucleoside 5'-diphosphate + [thioredoxin]-disulfide + H2O = a ribonucleoside 5'-diphosphate + [thioredoxin]-dithiol. With respect to regulation, under complex allosteric control mediated by deoxynucleoside triphosphates and ATP binding. The type of nucleotide bound at the specificity site determines substrate preference. It seems probable that ATP makes the enzyme reduce CDP and UDP, dGTP favors ADP reduction and dTTP favors GDP reduction. In terms of biological role, provides the precursors necessary for DNA synthesis. Catalyzes the biosynthesis of deoxyribonucleotides from the corresponding ribonucleotides. The polypeptide is Ribonucleoside-diphosphate reductase subunit alpha (nrdE) (Mycoplasma genitalium (strain ATCC 33530 / DSM 19775 / NCTC 10195 / G37) (Mycoplasmoides genitalium)).